The primary structure comprises 219 residues: 7-cyano-7-deazaguanine synthase (219 aa).

8-18 (LSGGMDSAVLL) serves as a coordination point for ATP. Zn(2+)-binding residues include cysteine 185, cysteine 193, cysteine 196, and cysteine 199.

The protein belongs to the QueC family. Requires Zn(2+) as cofactor.

It carries out the reaction 7-carboxy-7-deazaguanine + NH4(+) + ATP = 7-cyano-7-deazaguanine + ADP + phosphate + H2O + H(+). It participates in purine metabolism; 7-cyano-7-deazaguanine biosynthesis. Functionally, catalyzes the ATP-dependent conversion of 7-carboxy-7-deazaguanine (CDG) to 7-cyano-7-deazaguanine (preQ(0)). In Desulfotalea psychrophila (strain LSv54 / DSM 12343), this protein is 7-cyano-7-deazaguanine synthase.